The chain runs to 242 residues: 3-oxoacyl-[acyl-carrier-protein] reductase FabG (242 aa).

NADP(+) is bound by residues 10-13 (GSTR), Thr-35, 57-58 (NV), and Asn-84. Ser-136 is a binding site for substrate. Tyr-149 acts as the Proton acceptor in catalysis. Residues 149 to 153 (YCAAK) and Ile-182 contribute to the NADP(+) site.

This sequence belongs to the short-chain dehydrogenases/reductases (SDR) family. In terms of assembly, homotetramer.

The enzyme catalyses a (3R)-hydroxyacyl-[ACP] + NADP(+) = a 3-oxoacyl-[ACP] + NADPH + H(+). Its pathway is lipid metabolism; fatty acid biosynthesis. Functionally, catalyzes the NADPH-dependent reduction of beta-ketoacyl-ACP substrates to beta-hydroxyacyl-ACP products, the first reductive step in the elongation cycle of fatty acid biosynthesis. This chain is 3-oxoacyl-[acyl-carrier-protein] reductase FabG (fabG), found in Haemophilus influenzae (strain ATCC 51907 / DSM 11121 / KW20 / Rd).